Consider the following 650-residue polypeptide: ATP-binding cassette sub-family G member 3 (650 aa).

The Cytoplasmic portion of the chain corresponds to 1-387 (MASNNDPTVI…KNFKGFPWVT (387 aa)). Positions 37–279 (LSFHNISYQE…FRSAGYNYES (243 aa)) constitute an ABC transporter domain. Residues 381–644 (KGFPWVTVIQ…TITYVQLLQV (264 aa)) form the ABC transmembrane type-2 domain. Residues 388-408 (VIQAIITVILATAVGTAFRVL) traverse the membrane as a helical segment. Residues 409 to 420 (KNDCIEVQMRAG) lie on the Extracellular side of the membrane. The helical transmembrane segment at 421–441 (LLYLLTIFQCITSVSAGELFV) threads the bilayer. The Cytoplasmic portion of the chain corresponds to 442–469 (IDRVRFLHEHTSGYYRVSSYFFGKLLAE). Residues 470–490 (LIPRRLLPSTVFSLITYVIAG) form a helical membrane-spanning segment. Topologically, residues 491 to 498 (VKMSMKCF) are extracellular. Residues 499–519 (FTMICTIMVLAYSASSLPLSI) traverse the membrane as a helical segment. The Cytoplasmic portion of the chain corresponds to 520 to 527 (GAGENAVA). The chain crosses the membrane as a helical span at residues 528-548 (VPTLLVTIYFVFMLFFSGLSL). At 549-623 (YSGSFLPKLS…LSSWGFWENH (75 aa)) the chain is on the extracellular side. The chain crosses the membrane as a helical span at residues 624-644 (LALVCTMIILLTITYVQLLQV). Residues 645-648 (KNIR) are Cytoplasmic-facing.

It belongs to the ABC transporter superfamily. ABCG family. Eye pigment precursor importer (TC 3.A.1.204) subfamily. In terms of assembly, may dimerize with another subunit to form a functional transporter. As to expression, highest levels of expression in thymus and spleen. Detected in lung and small intestine.

The protein localises to the membrane. The chain is ATP-binding cassette sub-family G member 3 (Abcg3) from Mus musculus (Mouse).